The sequence spans 421 residues: Putative leucine-rich repeat protein R380 (421 aa).

7 LRR repeats span residues 48 to 69 (YLEKLFINNNNLKQLPDPQYLP), 70 to 85 (KIKELVCSYNILTHIP), 89 to 110 (NLIKLDISHNQVQNINVYNQSK), 111 to 129 (LLYLDCSFNKNIETRIFLP), 130 to 150 (ECRELYVNDANISKLEINYFP), 151 to 172 (NLRILDCSNNNISRISSLSSLI), and 173 to 191 (ELNIQNNHITELPSYPQLV).

The protein is Putative leucine-rich repeat protein R380 of Acanthamoeba polyphaga (Amoeba).